Consider the following 462-residue polypeptide: Cysteine--tRNA ligase (462 aa).

Cys28 is a binding site for Zn(2+). The short motif at 30 to 40 (VTIYDLCHIGH) is the 'HIGH' region element. Zn(2+)-binding residues include Cys211, His236, and Glu240. The short motif at 268–272 (KMSKS) is the 'KMSKS' region element. Lys271 is an ATP binding site.

It belongs to the class-I aminoacyl-tRNA synthetase family. In terms of assembly, monomer. Requires Zn(2+) as cofactor.

It is found in the cytoplasm. The enzyme catalyses tRNA(Cys) + L-cysteine + ATP = L-cysteinyl-tRNA(Cys) + AMP + diphosphate. The protein is Cysteine--tRNA ligase of Aliivibrio salmonicida (strain LFI1238) (Vibrio salmonicida (strain LFI1238)).